A 393-amino-acid polypeptide reads, in one-letter code: NADH-quinone oxidoreductase subunit D (393 aa).

This sequence belongs to the complex I 49 kDa subunit family. NDH-1 is composed of 14 different subunits. Subunits NuoB, C, D, E, F, and G constitute the peripheral sector of the complex.

The protein resides in the cell inner membrane. It catalyses the reaction a quinone + NADH + 5 H(+)(in) = a quinol + NAD(+) + 4 H(+)(out). Its function is as follows. NDH-1 shuttles electrons from NADH, via FMN and iron-sulfur (Fe-S) centers, to quinones in the respiratory chain. The immediate electron acceptor for the enzyme in this species is believed to be ubiquinone. Couples the redox reaction to proton translocation (for every two electrons transferred, four hydrogen ions are translocated across the cytoplasmic membrane), and thus conserves the redox energy in a proton gradient. The polypeptide is NADH-quinone oxidoreductase subunit D (Ehrlichia ruminantium (strain Gardel)).